Consider the following 130-residue polypeptide: MAGIKALVALSFSGALGLTFLLLGCALEQFGQYWPMFVLIFYILSPIPNLIARRHADDTESSNACRELAYFLTTGIVVSAYGLPVVLARKAVIQWGAAGLVMAGNCVIFLTILGFFLIFGGGDDFSWEQW.

The next 4 membrane-spanning stretches (helical) occupy residues 7–27 (LVAL…GCAL), 32–52 (QYWP…NLIA), 68–88 (LAYF…VVLA), and 99–119 (GLVM…FLIF).

It belongs to the OB-RGRP/VPS55 family.

It is found in the golgi apparatus membrane. The protein resides in the endosome membrane. In terms of biological role, involved in protein trafficking. May be involved in the down-regulation of membrane protein levels. In Danio rerio (Zebrafish), this protein is Leptin receptor gene-related protein (leprot).